The following is a 780-amino-acid chain: Protein phosphatase 1 regulatory subunit 21 (780 aa).

Coiled-coil stretches lie at residues 1–209 and 556–605; these read MASA…NLHE and ESRE…DRLR. The disordered stretch occupies residues 84–104; it reads EPRGKKNKKSGESSSQLSQEQ. The span at 95–104 shows a compositional bias: low complexity; that stretch reads ESSSQLSQEQ. A Phosphothreonine modification is found at Thr652. The stretch at 694 to 742 forms a coiled coil; sequence AECRALSKRLALAEKSKETLTEEMRLASQNISRLQDELMTTKRSYEDQL.

As to quaternary structure, component of the FERRY complex, composed of five subunits: TBCK, PPP1R21, FERRY3, CRYZL1 and GATAD1, with a ratio of 1:2:1:2:4 respectively. PPP1R21 serves as a binding hub connecting all five complex subunits to mediate the binding to specific mitochondrial mRNAs. Interacts with the GTP-bound form of RAB5A (via its C-terminal region); linking the mRNP complex onto trafficking endosomes for active mRNA transport. Interacts with PPP1CA. As to expression, expressed at 16 dpc in the cortex (at protein level).

The protein resides in the early endosome. In terms of biological role, component of the FERRY complex (Five-subunit Endosomal Rab5 and RNA/ribosome intermediary). The FERRY complex directly interacts with mRNAs and RAB5A, and functions as a RAB5A effector involved in the localization and the distribution of specific mRNAs most likely by mediating their endosomal transport. The complex recruits mRNAs and ribosomes to early endosomes through direct mRNA-interaction. In the complex, PPP1R21 serves as a binding hub connecting all five complex subunits and mediating the binding to mRNA and early endosomes via RAB5A. Putative regulator of protein phosphatase 1 (PP1) activity. May play a role in the endosomal sorting process or in endosome maturation pathway. The chain is Protein phosphatase 1 regulatory subunit 21 (Ppp1r21) from Mus musculus (Mouse).